A 1414-amino-acid chain; its full sequence is DNA-directed RNA polymerase subunit beta' (1414 aa).

Positions 70, 72, 85, and 88 each coordinate Zn(2+). Positions 460, 462, and 464 each coordinate Mg(2+). Zn(2+)-binding residues include Cys-815, Cys-889, Cys-896, and Cys-899. A disordered region spans residues 1395–1414 (EAEAQFADVSSTPDSDTDAS).

This sequence belongs to the RNA polymerase beta' chain family. The RNAP catalytic core consists of 2 alpha, 1 beta, 1 beta' and 1 omega subunit. When a sigma factor is associated with the core the holoenzyme is formed, which can initiate transcription. Mg(2+) serves as cofactor. Zn(2+) is required as a cofactor.

It carries out the reaction RNA(n) + a ribonucleoside 5'-triphosphate = RNA(n+1) + diphosphate. Functionally, DNA-dependent RNA polymerase catalyzes the transcription of DNA into RNA using the four ribonucleoside triphosphates as substrates. The sequence is that of DNA-directed RNA polymerase subunit beta' from Janthinobacterium sp. (strain Marseille) (Minibacterium massiliensis).